A 230-amino-acid polypeptide reads, in one-letter code: Enolase-phosphatase E1 (230 aa).

Belongs to the HAD-like hydrolase superfamily. MasA/MtnC family. In terms of assembly, monomer. Requires Mg(2+) as cofactor.

The catalysed reaction is 5-methylsulfanyl-2,3-dioxopentyl phosphate + H2O = 1,2-dihydroxy-5-(methylsulfanyl)pent-1-en-3-one + phosphate. It participates in amino-acid biosynthesis; L-methionine biosynthesis via salvage pathway; L-methionine from S-methyl-5-thio-alpha-D-ribose 1-phosphate: step 3/6. Its pathway is amino-acid biosynthesis; L-methionine biosynthesis via salvage pathway; L-methionine from S-methyl-5-thio-alpha-D-ribose 1-phosphate: step 4/6. Its function is as follows. Bifunctional enzyme that catalyzes the enolization of 2,3-diketo-5-methylthiopentyl-1-phosphate (DK-MTP-1-P) into the intermediate 2-hydroxy-3-keto-5-methylthiopentenyl-1-phosphate (HK-MTPenyl-1-P), which is then dephosphorylated to form the acireductone 1,2-dihydroxy-3-keto-5-methylthiopentene (DHK-MTPene). The sequence is that of Enolase-phosphatase E1 from Sulfurihydrogenibium sp. (strain YO3AOP1).